The following is a 434-amino-acid chain: MTRNLEKKMSIREDAQQGKVTPLFEQCAAVESMSVERLMAGVSDGTIAITKNKNHAFSKVIAIGAGTSTKVNANLGSSKDINSLEEELKKLAVAIKAGADTIMDLSMGGDLQKIRQEILKNCSVPLGTVPIYQVAAEVVAAGKEIVDMTVERMFEVIEQQAKDGVDFMTIHCGINRHLQERLKNQPRTMGVVSRGGSFTLDWMNHHKRENPMYEYFDDLLAILKEHEVTLSLGDGIRPGCLADATDRNQIQELITLGELTERAWAAGVQVIVEGPGHMPLNQIKANVLLQKQMCKGAPFYVLGPLVTDIAPGYDHITGAIGGAIAASAGADYLCYVTPAEHLKLPNCSDVHEGVIASKIAAHAADIVKGLPGAIEKDNAMAKCRKELDWKGQIELSIDPAKSAQYRHEGGGDATDACSMCGEFCALKVFERSQK.

Substrate-binding positions include N74, M103, Y132, H171, 193 to 195 (SRG), 234 to 237 (DGIR), and E273. Zn(2+) is bound at residue H277. Y300 is a substrate binding site. H341 contributes to the Zn(2+) binding site. [4Fe-4S] cluster contacts are provided by C417, C420, and C424.

Belongs to the ThiC family. Homodimer. Requires [4Fe-4S] cluster as cofactor.

It carries out the reaction 5-amino-1-(5-phospho-beta-D-ribosyl)imidazole + S-adenosyl-L-methionine = 4-amino-2-methyl-5-(phosphooxymethyl)pyrimidine + CO + 5'-deoxyadenosine + formate + L-methionine + 3 H(+). It participates in cofactor biosynthesis; thiamine diphosphate biosynthesis. In terms of biological role, catalyzes the synthesis of the hydroxymethylpyrimidine phosphate (HMP-P) moiety of thiamine from aminoimidazole ribotide (AIR) in a radical S-adenosyl-L-methionine (SAM)-dependent reaction. The protein is Phosphomethylpyrimidine synthase of Desulfotalea psychrophila (strain LSv54 / DSM 12343).